The primary structure comprises 561 residues: NAD(P)H-quinone oxidoreductase chain 4 2 (561 aa).

A run of 14 helical transmembrane segments spans residues 6–26 (FPWL…IPFI), 36–56 (WYGL…FWKY), 87–107 (LSMP…FAAW), 115–135 (LFYF…VAQD), 136–156 (LMLL…LISI), 169–189 (FLLY…GMAL), 210–230 (AFEL…LAVF), 244–264 (SAPV…YGLI), 275–295 (HVYF…YGGL), 312–332 (VAHM…GISG), 333–353 (ALLQ…LAGV), 376–396 (IFAL…MSGF), 419–439 (VTVF…LSML), and 490–510 (VAIA…PKIA).

It belongs to the complex I subunit 4 family.

It is found in the cellular thylakoid membrane. The enzyme catalyses a plastoquinone + NADH + (n+1) H(+)(in) = a plastoquinol + NAD(+) + n H(+)(out). It catalyses the reaction a plastoquinone + NADPH + (n+1) H(+)(in) = a plastoquinol + NADP(+) + n H(+)(out). Its function is as follows. NDH-1 shuttles electrons from NAD(P)H, via FMN and iron-sulfur (Fe-S) centers, to quinones in the respiratory chain. The immediate electron acceptor for the enzyme in this species is believed to be plastoquinone. Couples the redox reaction to proton translocation (for every two electrons transferred, four hydrogen ions are translocated across the cytoplasmic membrane), and thus conserves the redox energy in a proton gradient. This Trichodesmium erythraeum (strain IMS101) protein is NAD(P)H-quinone oxidoreductase chain 4 2.